We begin with the raw amino-acid sequence, 231 residues long: Small ribosomal subunit protein uS3 (231 aa).

In terms of domain architecture, KH type-2 spans 39-107; sequence IRKYIVENLP…DVKLNIVEIR (69 aa).

The protein belongs to the universal ribosomal protein uS3 family. In terms of assembly, part of the 30S ribosomal subunit. Forms a tight complex with proteins S10 and S14.

Binds the lower part of the 30S subunit head. Binds mRNA in the 70S ribosome, positioning it for translation. The sequence is that of Small ribosomal subunit protein uS3 from Novosphingobium aromaticivorans (strain ATCC 700278 / DSM 12444 / CCUG 56034 / CIP 105152 / NBRC 16084 / F199).